The following is a 336-amino-acid chain: Delta(1)-pyrroline-2-carboxylate reductase (336 aa).

Residue S47 is the Charge relay system of the active site. H48 functions as the Proton donor in the catalytic mechanism. Substrate is bound at residue R52. 120-124 (HFSAL) lines the NADP(+) pocket. T160 is a substrate binding site. Residue 178–180 (DFA) coordinates NADP(+). 186-187 (RG) is a binding site for substrate. The active-site Charge relay system is D188. NADP(+)-binding positions include 229 to 230 (HK) and 304 to 310 (RLPSQRR).

It belongs to the LDH2/MDH2 oxidoreductase family. Homodimer.

It carries out the reaction L-proline + NAD(+) = 1-pyrroline-2-carboxylate + NADH + H(+). It catalyses the reaction L-proline + NADP(+) = 1-pyrroline-2-carboxylate + NADPH + H(+). Its function is as follows. Catalyzes the reduction of Delta(1)-pyrroline-2-carboxylate (Pyr2C) to L-proline, using NADPH as the electron donor. May be involved in a degradation pathway that converts trans-3-hydroxy-L-proline (t3LHyp) to L-proline. The polypeptide is Delta(1)-pyrroline-2-carboxylate reductase (Pseudomonas fluorescens (strain ATCC BAA-477 / NRRL B-23932 / Pf-5)).